Consider the following 95-residue polypeptide: Aspartyl/glutamyl-tRNA(Asn/Gln) amidotransferase subunit C (95 aa).

Belongs to the GatC family. As to quaternary structure, heterotrimer of A, B and C subunits.

It carries out the reaction L-glutamyl-tRNA(Gln) + L-glutamine + ATP + H2O = L-glutaminyl-tRNA(Gln) + L-glutamate + ADP + phosphate + H(+). The catalysed reaction is L-aspartyl-tRNA(Asn) + L-glutamine + ATP + H2O = L-asparaginyl-tRNA(Asn) + L-glutamate + ADP + phosphate + 2 H(+). Functionally, allows the formation of correctly charged Asn-tRNA(Asn) or Gln-tRNA(Gln) through the transamidation of misacylated Asp-tRNA(Asn) or Glu-tRNA(Gln) in organisms which lack either or both of asparaginyl-tRNA or glutaminyl-tRNA synthetases. The reaction takes place in the presence of glutamine and ATP through an activated phospho-Asp-tRNA(Asn) or phospho-Glu-tRNA(Gln). This is Aspartyl/glutamyl-tRNA(Asn/Gln) amidotransferase subunit C from Gluconobacter oxydans (strain 621H) (Gluconobacter suboxydans).